The sequence spans 282 residues: Bifunctional protein FolD (282 aa).

Residues 164–166 (GAS), isoleucine 189, and isoleucine 230 each bind NADP(+).

The protein belongs to the tetrahydrofolate dehydrogenase/cyclohydrolase family. As to quaternary structure, homodimer.

It catalyses the reaction (6R)-5,10-methylene-5,6,7,8-tetrahydrofolate + NADP(+) = (6R)-5,10-methenyltetrahydrofolate + NADPH. It carries out the reaction (6R)-5,10-methenyltetrahydrofolate + H2O = (6R)-10-formyltetrahydrofolate + H(+). It functions in the pathway one-carbon metabolism; tetrahydrofolate interconversion. Functionally, catalyzes the oxidation of 5,10-methylenetetrahydrofolate to 5,10-methenyltetrahydrofolate and then the hydrolysis of 5,10-methenyltetrahydrofolate to 10-formyltetrahydrofolate. The protein is Bifunctional protein FolD of Campylobacter jejuni subsp. jejuni serotype O:2 (strain ATCC 700819 / NCTC 11168).